The chain runs to 261 residues: Undecaprenyl-diphosphatase (261 aa).

7 helical membrane passes run 38-58 (RSDF…TFVF), 75-95 (RDYV…GLAV), 106-126 (IQPI…AESV), 136-156 (VTWS…VFPG), 181-201 (FSFL…CFEL), 217-237 (VAFV…LGYI), and 241-261 (SFAP…TWLT).

The protein belongs to the UppP family.

The protein localises to the cell inner membrane. The catalysed reaction is di-trans,octa-cis-undecaprenyl diphosphate + H2O = di-trans,octa-cis-undecaprenyl phosphate + phosphate + H(+). Functionally, catalyzes the dephosphorylation of undecaprenyl diphosphate (UPP). Confers resistance to bacitracin. In Xylella fastidiosa (strain Temecula1 / ATCC 700964), this protein is Undecaprenyl-diphosphatase.